A 139-amino-acid polypeptide reads, in one-letter code: Ribonuclease P protein component (139 aa).

Residues 120 to 139 (KPTTGVEYSPKNEKCESVLP) form a disordered region. The span at 129 to 139 (PKNEKCESVLP) shows a compositional bias: basic and acidic residues.

This sequence belongs to the RnpA family. Consists of a catalytic RNA component (M1 or rnpB) and a protein subunit.

It carries out the reaction Endonucleolytic cleavage of RNA, removing 5'-extranucleotides from tRNA precursor.. RNaseP catalyzes the removal of the 5'-leader sequence from pre-tRNA to produce the mature 5'-terminus. It can also cleave other RNA substrates such as 4.5S RNA. The protein component plays an auxiliary but essential role in vivo by binding to the 5'-leader sequence and broadening the substrate specificity of the ribozyme. This is Ribonuclease P protein component from Chlamydia caviae (strain ATCC VR-813 / DSM 19441 / 03DC25 / GPIC) (Chlamydophila caviae).